Here is a 485-residue protein sequence, read N- to C-terminus: UDP-N-acetylmuramate--L-alanine ligase (485 aa).

An ATP-binding site is contributed by 120–126; that stretch reads GSHGKTT.

This sequence belongs to the MurCDEF family.

It is found in the cytoplasm. The enzyme catalyses UDP-N-acetyl-alpha-D-muramate + L-alanine + ATP = UDP-N-acetyl-alpha-D-muramoyl-L-alanine + ADP + phosphate + H(+). The protein operates within cell wall biogenesis; peptidoglycan biosynthesis. Cell wall formation. The sequence is that of UDP-N-acetylmuramate--L-alanine ligase from Rickettsia rickettsii (strain Iowa).